The sequence spans 57 residues: Large ribosomal subunit protein bL32c (57 aa).

It belongs to the bacterial ribosomal protein bL32 family.

The protein localises to the plastid. It is found in the chloroplast. The sequence is that of Large ribosomal subunit protein bL32c from Amborella trichopoda.